A 415-amino-acid chain; its full sequence is Adipocyte plasma membrane-associated protein (415 aa).

The Cytoplasmic portion of the chain corresponds to 1–39 (MNEPEGLRFRRLNRPHIITDETHEPQYKATSTYSGKVFR). Residues 40 to 60 (VTLLTMVAFLLLPLLVVVFVL) form a helical membrane-spanning segment. Over 61-412 (ESPIQPEVFS…RSPYLCKLDL (352 aa)) the chain is Extracellular. Asn159 carries N-linked (GlcNAc...) asparagine glycosylation.

The protein belongs to the strictosidine synthase family.

The protein localises to the membrane. This is Adipocyte plasma membrane-associated protein (apmap) from Danio rerio (Zebrafish).